We begin with the raw amino-acid sequence, 456 residues long: Equilibrative nucleoside transporter 2 (456 aa).

The helical transmembrane segment at 13–33 (LVGISFFILGLGTLLPWNFFI) threads the bilayer. N-linked (GlcNAc...) asparagine glycans are attached at residues asparagine 48 and asparagine 57. The next 5 membrane-spanning stretches (helical) occupy residues 70-90 (WVTLLSQLPLLLFTLLNSFLY), 99-119 (ILGSLLAILLLFALTAALVKV), 124-144 (GPFFSITMASVCFINSFSAVL), 162-182 (LFLSGQGLAGIFAALAMLLSM), and 193-213 (LGYFITPCVGILMSIVCYLSL). Asparagine 225 is a glycosylation site (N-linked (GlcNAc...) asparagine). Serine 252 carries the phosphoserine modification. The next 5 membrane-spanning stretches (helical) occupy residues 291-311 (WLTALCLVLVFTVTLSVFPAI), 324-344 (WSQFFNPICCFLLFNIMDWLG), 360-380 (LLPLLVCLRFLFVPLFMLCHV), 386-406 (LPILFPQDAYFITFMLLFAVS), and 432-452 (ALMTFFLALGLSCGASLSFLF).

The protein belongs to the SLC29A/ENT transporter (TC 2.A.57) family. In terms of processing, glycosylated. Highly expressed in skeletal muscle. Expressed in liver, lung, placenta, brain, heart, kidney and ovarian tissues. Expressed in testis at the blood-brain-barrier.

The protein localises to the apical cell membrane. The protein resides in the basolateral cell membrane. The catalysed reaction is inosine(in) = inosine(out). The enzyme catalyses adenosine(in) = adenosine(out). It carries out the reaction uridine(out) = uridine(in). It catalyses the reaction thymidine(in) = thymidine(out). The catalysed reaction is hypoxanthine(out) = hypoxanthine(in). The enzyme catalyses adenine(out) = adenine(in). It carries out the reaction cytidine(in) = cytidine(out). It catalyses the reaction thymine(out) = thymine(in). The catalysed reaction is uracil(in) = uracil(out). The enzyme catalyses guanine(out) = guanine(in). It carries out the reaction guanosine(in) = guanosine(out). Functionally, bidirectional uniporter involved in the facilitative transport of nucleosides and nucleobases, and contributes to maintaining their cellular homeostasis. Functions as a Na(+)-independent, passive transporter. Involved in the transport of nucleosides such as inosine, adenosine, uridine, thymidine, cytidine and guanosine. Also able to transport purine nucleobases (hypoxanthine, adenine, guanine) and pyrimidine nucleobases (thymine, uracil). Involved in nucleoside transport at basolateral membrane of kidney cells, allowing liver absorption of nucleoside metabolites. Mediates apical nucleoside uptake into Sertoli cells, thereby regulating the transport of nucleosides in testis across the blood-testis-barrier. Mediates both the influx and efflux of hypoxanthine in skeletal muscle microvascular endothelial cells to control the amount of intracellular hypoxanthine available for xanthine oxidase-mediated ROS production. Its function is as follows. Non functional nucleoside transporter protein for adenosine or thymidine transport. Does not express on cell membrane. This is Equilibrative nucleoside transporter 2 from Homo sapiens (Human).